Consider the following 335-residue polypeptide: Galactosylgalactosylxylosylprotein 3-beta-glucuronosyltransferase 3 (335 aa).

The Cytoplasmic portion of the chain corresponds to 1–7 (MKLKLKN). A helical; Signal-anchor for type II membrane protein membrane pass occupies residues 8–28 (VFLAYFLVSIAGLLYALVQLG). At 29–335 (QPCDCLPPLR…GQGSDPAIEV (307 aa)) the chain is on the lumenal side. UDP-alpha-D-glucuronate is bound by residues 82–84 (PTY), Asp-113, Arg-156, Arg-161, and 194–196 (DDD). Asp-196 is a binding site for Mn(2+). An interaction with galactose moiety of substrate glycoprotein region spans residues 243 to 252 (WEPNRPFPLD). The active-site Proton donor/acceptor is Glu-281. Asn-300 is a glycosylation site (N-linked (GlcNAc...) asparagine). UDP-alpha-D-glucuronate is bound at residue 308–310 (HTR). Positions 312–322 (EKPKMKQEEQL) are enriched in basic and acidic residues. The segment at 312-335 (EKPKMKQEEQLQRQGQGSDPAIEV) is disordered.

Belongs to the glycosyltransferase 43 family. In terms of assembly, homodimer; disulfide-linked. Interacts with PXYLP1; the interaction increases the 2-phosphoxylose phosphatase activity of PXYLP1 during completion of linkage region formation in a B3GAT3-mediated manner. Requires Mn(2+) as cofactor. N-glycosylated. In terms of tissue distribution, expressed in heart, aorta, bone, and also in osteoblasts.

It localises to the golgi apparatus membrane. The protein localises to the golgi apparatus. Its subcellular location is the cis-Golgi network. The catalysed reaction is 3-O-(beta-D-galactosyl-(1-&gt;3)-beta-D-galactosyl-(1-&gt;4)-beta-D-xylosyl)-L-seryl-[protein] + UDP-alpha-D-glucuronate = 3-O-(beta-D-GlcA-(1-&gt;3)-beta-D-Gal-(1-&gt;3)-beta-D-Gal-(1-&gt;4)-beta-D-Xyl)-L-seryl-[protein] + UDP + H(+). It participates in protein modification; protein glycosylation. Functionally, glycosaminoglycans biosynthesis. Involved in forming the linkage tetrasaccharide present in heparan sulfate and chondroitin sulfate. Transfers a glucuronic acid moiety from the uridine diphosphate-glucuronic acid (UDP-GlcUA) to the common linkage region trisaccharide Gal-beta-1,3-Gal-beta-1,4-Xyl covalently bound to a Ser residue at the glycosaminylglycan attachment site of proteoglycans. Can also play a role in the biosynthesis of l2/HNK-1 carbohydrate epitope on glycoproteins. Stimulates 2-phosphoxylose phosphatase activity of PXYLP1 in presence of uridine diphosphate-glucuronic acid (UDP-GlcUA) during completion of linkage region formation. The protein is Galactosylgalactosylxylosylprotein 3-beta-glucuronosyltransferase 3 (B3gat3) of Mus musculus (Mouse).